A 635-amino-acid polypeptide reads, in one-letter code: Sulfite reductase [ferredoxin], chloroplastic (635 aa).

A chloroplast-targeting transit peptide spans Met-1–Ala-50. Disordered stretches follow at residues Arg-31–Ala-50 and Pro-245–Ile-267. Basic and acidic residues predominate over residues Pro-245–Asn-254. The [4Fe-4S] cluster site is built by Cys-494, Cys-500, Cys-540, and Cys-544. Siroheme is bound at residue Cys-544.

The protein belongs to the nitrite and sulfite reductase 4Fe-4S domain family. As to quaternary structure, monomer. Interacts with ferredoxin. It depends on siroheme as a cofactor. [4Fe-4S] cluster serves as cofactor. In terms of processing, phosphorylated; this phosphorylation reduces DNA-binding. As to expression, present in roots and leaves (at protein level). In leaves, sulfite reductase activity is detected in both bundle sheath and mesophyll cell types.

Its subcellular location is the plastid. It is found in the chloroplast stroma. The protein localises to the chloroplast nucleoid. It localises to the plastid stroma. The catalysed reaction is hydrogen sulfide + 6 oxidized [2Fe-2S]-[ferredoxin] + 3 H2O = sulfite + 6 reduced [2Fe-2S]-[ferredoxin] + 7 H(+). Its activity is regulated as follows. Inhibited by the tryptophan-modifying reagent, N-bromosuccinimide (NBS), by the lysine-modifying reagent, N-acetylsuccinimide and by the arginine-modifying reagent, phenylglyoxal. Complex formation with ferredoxin prevents these inhibitions. Essential protein with sulfite reductase activity required in assimilatory sulfate reduction pathway during both primary and secondary metabolism and thus involved in development and growth. Functionally, DNA-binding protein that binds to both double-stranded and single-stranded DNA without significant sequence specificity to reversibly repress the transcriptional activity of chloroplast nucleoids by promoting DNA compaction and possibly regulate DNA replication. The protein is Sulfite reductase [ferredoxin], chloroplastic (SIR) of Zea mays (Maize).